The following is a 380-amino-acid chain: Cytochrome b (380 aa).

Helical transmembrane passes span 33–53 (FGSLLGLCLFSQILTGLFLAM), 77–98 (WFIRSLHANGASFFFICIYLHI), 113–133 (WTIGVVLLGLVMATAFVGYVL), and 178–198 (FFTFHFLLPFIIAAATLVHLL). 2 residues coordinate heme b: His83 and His97. Heme b-binding residues include His182 and His196. Position 201 (His201) interacts with a ubiquinone. 4 consecutive transmembrane segments (helical) span residues 226-246 (YKDLLGFLALLSALTSLALFS), 288-308 (LGGVLALLFSILVLVLVPILH), 320-340 (LTQTLFWTLVADMLILTWIGG), and 347-367 (FVIIGQVASTLYFLLFLVLAP).

The protein belongs to the cytochrome b family. The cytochrome bc1 complex contains 3 respiratory subunits (MT-CYB, CYC1 and UQCRFS1), 2 core proteins (UQCRC1 and UQCRC2) and probably 6 low-molecular weight proteins. Heme b serves as cofactor.

The protein resides in the mitochondrion inner membrane. Component of the ubiquinol-cytochrome c reductase complex (complex III or cytochrome b-c1 complex) that is part of the mitochondrial respiratory chain. The b-c1 complex mediates electron transfer from ubiquinol to cytochrome c. Contributes to the generation of a proton gradient across the mitochondrial membrane that is then used for ATP synthesis. The polypeptide is Cytochrome b (mt-cyb) (Lampris guttatus (Opah)).